The following is a 118-amino-acid chain: Small ribosomal subunit protein uS13 (118 aa).

The interval 91-118 (HRRSLPVRGQRTKTNARTRKGPRKPIRK) is disordered.

It belongs to the universal ribosomal protein uS13 family. Part of the 30S ribosomal subunit. Forms a loose heterodimer with protein S19. Forms two bridges to the 50S subunit in the 70S ribosome.

In terms of biological role, located at the top of the head of the 30S subunit, it contacts several helices of the 16S rRNA. In the 70S ribosome it contacts the 23S rRNA (bridge B1a) and protein L5 of the 50S subunit (bridge B1b), connecting the 2 subunits; these bridges are implicated in subunit movement. Contacts the tRNAs in the A and P-sites. In Marinomonas sp. (strain MWYL1), this protein is Small ribosomal subunit protein uS13.